Reading from the N-terminus, the 305-residue chain is Glycine betaine-binding protein YehZ (305 aa).

An N-terminal signal peptide occupies residues 1-23 (MPLLKLWAGSLVMLAAVSLPLQA).

Belongs to the OsmX family. As to quaternary structure, the complex is composed of two ATP-binding proteins (YehX), two transmembrane proteins (YehW and YehY) and a solute-binding protein (YehZ).

The protein resides in the periplasm. Functionally, part of an ABC transporter complex involved in low-affinity glycine betaine uptake. Binds glycine betaine with low affinity. This is Glycine betaine-binding protein YehZ (yehZ) from Escherichia coli (strain K12).